A 1114-amino-acid chain; its full sequence is Probable guanine nucleotide exchange factor MCF2L2 (1114 aa).

Residues 11-193 form the CRAL-TRIO domain; it reads PQELTRRLAT…ELGGTLEYRH (183 aa). One copy of the Spectrin repeat lies at 323–428; sequence QHFEHDFCKA…KWDILGKSLE (106 aa). Residues 530 to 614 form a disordered region; that stretch reads QTRPVQPVAP…NPELEQQARL (85 aa). The span at 546-559 shows a compositional bias: polar residues; it reads KWVSSKTSQPSTSV. The span at 577–606 shows a compositional bias: basic and acidic residues; that stretch reads LNSRGKEDDETKFEVKSEEIFESHHERGNP. The region spanning 619-822 is the DH domain; it reads PRRRIIRDLL…EDLIKSCELA (204 aa). The region spanning 834-954 is the PH domain; sequence DIGKLGKLLL…WFSEISKLLM (121 aa). Positions 962–975 are enriched in polar residues; the sequence is DQGNPQFEMSTSKG. Positions 962-1114 are disordered; that stretch reads DQGNPQFEMS…LRPRTSAQES (153 aa). The segment covering 986–997 has biased composition (basic and acidic residues); sequence NMERATTSKEDP. Acidic residues predominate over residues 1017–1028; the sequence is TFEDCEGAEDME. 2 stretches are compositionally biased toward basic and acidic residues: residues 1043 to 1067 and 1074 to 1084; these read DDSH…GEKE and TATRSTEEERA.

It belongs to the MCF2 family. In terms of tissue distribution, significantly expressed in brain and modestly in pancreas, brain and testis.

Functionally, probably functions as a guanine nucleotide exchange factor. The protein is Probable guanine nucleotide exchange factor MCF2L2 (MCF2L2) of Homo sapiens (Human).